The chain runs to 365 residues: uncharacterized protein (365 aa).

3 disordered regions span residues 119 to 157 (ERSR…QQES), 216 to 298 (RPPG…DISH), and 313 to 365 (SHHH…LSVG). Positions 326–340 (SDPRIESRDLPERPQ) are enriched in basic and acidic residues.

This is an uncharacterized protein from Homo sapiens (Human).